The primary structure comprises 473 residues: Phosphoglucosamine mutase (473 aa).

Ser-102 (phosphoserine intermediate) is an active-site residue. The Mg(2+) site is built by Ser-102, Asp-248, Asp-250, and Asp-252. A Phosphoserine modification is found at Ser-102.

Belongs to the phosphohexose mutase family. It depends on Mg(2+) as a cofactor. In terms of processing, activated by phosphorylation.

It catalyses the reaction alpha-D-glucosamine 1-phosphate = D-glucosamine 6-phosphate. In terms of biological role, catalyzes the conversion of glucosamine-6-phosphate to glucosamine-1-phosphate. The polypeptide is Phosphoglucosamine mutase (Rhodospirillum centenum (strain ATCC 51521 / SW)).